We begin with the raw amino-acid sequence, 121 residues long: Fluoride-specific ion channel FluC 3 (121 aa).

4 consecutive transmembrane segments (helical) span residues 3 to 23 (VFLPILVCLCGGVGASCRYLL), 40 to 60 (FTINLIAGFLAGLVAALALGG), 69 to 89 (VLATGFLGGFSTFSTAINEMV), and 101 to 121 (AAYLVLSLGVPVVAAACGFLV). The Na(+) site is built by glycine 76 and serine 79.

Belongs to the fluoride channel Fluc/FEX (TC 1.A.43) family.

Its subcellular location is the cell membrane. The catalysed reaction is fluoride(in) = fluoride(out). Its activity is regulated as follows. Na(+) is not transported, but it plays an essential structural role and its presence is essential for fluoride channel function. Functionally, fluoride-specific ion channel. Important for reducing fluoride concentration in the cell, thus reducing its toxicity. In Bifidobacterium longum (strain NCC 2705), this protein is Fluoride-specific ion channel FluC 3.